A 410-amino-acid chain; its full sequence is Mating-type locus allele B1 protein (410 aa).

The tract at residues 1–110 (MSSDPNFSLI…FNVVSPDVGC (110 aa)) is variable domain between B alleles. The segment at residues 107–184 (DVGCRNLSED…NARRRSGWSH (78 aa)) is a DNA-binding region (homeobox; TALE-type). The segment at 111–410 (RNLSEDLPAY…PFLCLSVAFV (300 aa)) is highly conserved between B alleles. 3 disordered regions span residues 202–239 (RAKLSSSNQSTPPSSTSDSLSNNLDDVLSDNLGRPLTP), 278–335 (TPKP…TPEL), and 374–395 (ARGNRKVKALPKRAGKQQPDEV). Over residues 205–233 (LSSSNQSTPPSSTSDSLSNNLDDVLSDNL) the composition is skewed to low complexity. The short motif at 276 to 308 (KKTPKPGMPRPVTTVAKRHPARKTKPAAKPKSR) is the Nuclear localization signal element. Basic residues predominate over residues 291-307 (AKRHPARKTKPAAKPKS). Positions 312-335 (PRASTTPSIDSTLDSSKLESTPEL) are enriched in polar residues. The segment at 333 to 410 (PELSMCSTAD…PFLCLSVAFV (78 aa)) is not essential for B1 function. The span at 375-388 (RGNRKVKALPKRAG) shows a compositional bias: basic residues.

It belongs to the TALE/M-ATYP homeobox family.

It is found in the nucleus. The B locus has at least 25 alleles, and any combination of two different B alleles yields a multimeric regulatory protein, that activates genes responsible for the pathogenicity and for the sexual development of the fungus within the corn plant. The protein is Mating-type locus allele B1 protein of Mycosarcoma maydis (Corn smut fungus).